The chain runs to 221 residues: uncharacterized protein (221 aa).

The MOSC domain occupies 33 to 167; that stretch reads RPAKSAVMLY…VSPGANLELL (135 aa).

This is an uncharacterized protein from Bacillus subtilis (strain 168).